Consider the following 325-residue polypeptide: D-xylose 1-dehydrogenase (NADP(+)) 2 (325 aa).

Positions 1 to 22 are cleaved as a signal peptide; sequence MMFGILGTAGIGVKSVIPAVQA.

This sequence belongs to the Gfo/Idh/MocA family. As to quaternary structure, homotetramer.

It localises to the secreted. It carries out the reaction D-xylose + NADP(+) = D-xylono-1,5-lactone + NADPH + H(+). NADP-dependent D-xylose dehydrogenase involved in the degradation of D-xylose, a major component of hemicelluloses such as xylan. Even if it shows D-xylose dehydrogenase activity, it is not essential for D-xylose degradation. This chain is D-xylose 1-dehydrogenase (NADP(+)) 2, found in Haloferax volcanii (strain ATCC 29605 / DSM 3757 / JCM 8879 / NBRC 14742 / NCIMB 2012 / VKM B-1768 / DS2) (Halobacterium volcanii).